The chain runs to 317 residues: MTCKIIGCGQYLPSKIVSNDELTKFVDTNDEWIRTRTGITQRHIADDTEYTSHLALKSAEKAIEDAGISANDIDLIIICTTTPDHSFPSVATKLQGYLGLTNIPSFDLQAVCAGFVYGLQVANSLIASSKYKTVLLIGAEKMTSLLDWNDRSTCVLFGDGAGSVILQRSSDDSGLIESNIFSSGIDYDILYTNGGISMNGTSGKIIMQGQKLFRHAIEKMQQSIEELLCANQFSVSDIDYFIPHQANVRIINKLAELLNIEEHKIIKTVEKHANCSAASIPLALSTLKGLGKIKKGDILLFSAIGAGLTWGSALIRW.

Active-site residues include Cys112 and His244. The tract at residues 245–249 (QANVR) is ACP-binding. The active site involves Asn274.

It belongs to the thiolase-like superfamily. FabH family. In terms of assembly, homodimer.

It localises to the cytoplasm. The catalysed reaction is malonyl-[ACP] + acetyl-CoA + H(+) = 3-oxobutanoyl-[ACP] + CO2 + CoA. It functions in the pathway lipid metabolism; fatty acid biosynthesis. Functionally, catalyzes the condensation reaction of fatty acid synthesis by the addition to an acyl acceptor of two carbons from malonyl-ACP. Catalyzes the first condensation reaction which initiates fatty acid synthesis and may therefore play a role in governing the total rate of fatty acid production. Possesses both acetoacetyl-ACP synthase and acetyl transacylase activities. Its substrate specificity determines the biosynthesis of branched-chain and/or straight-chain of fatty acids. This chain is Beta-ketoacyl-[acyl-carrier-protein] synthase III, found in Rickettsia canadensis (strain McKiel).